Consider the following 331-residue polypeptide: D-lactate dehydrogenase (331 aa).

NAD(+) is bound by residues 156 to 157 (RI), Asp176, 206 to 207 (MP), 233 to 235 (TAR), and Asp259. The active site involves Arg235. Glu264 is a catalytic residue. The active-site Proton donor is His296.

Belongs to the D-isomer specific 2-hydroxyacid dehydrogenase family.

It carries out the reaction (R)-lactate + NAD(+) = pyruvate + NADH + H(+). In Treponema pallidum (strain Nichols), this protein is D-lactate dehydrogenase (ldhD).